The primary structure comprises 252 residues: Imidazole glycerol phosphate synthase subunit HisF (252 aa).

Catalysis depends on residues Asp11 and Asp130.

Belongs to the HisA/HisF family. Heterodimer of HisH and HisF.

It is found in the cytoplasm. The enzyme catalyses 5-[(5-phospho-1-deoxy-D-ribulos-1-ylimino)methylamino]-1-(5-phospho-beta-D-ribosyl)imidazole-4-carboxamide + L-glutamine = D-erythro-1-(imidazol-4-yl)glycerol 3-phosphate + 5-amino-1-(5-phospho-beta-D-ribosyl)imidazole-4-carboxamide + L-glutamate + H(+). The protein operates within amino-acid biosynthesis; L-histidine biosynthesis; L-histidine from 5-phospho-alpha-D-ribose 1-diphosphate: step 5/9. IGPS catalyzes the conversion of PRFAR and glutamine to IGP, AICAR and glutamate. The HisF subunit catalyzes the cyclization activity that produces IGP and AICAR from PRFAR using the ammonia provided by the HisH subunit. The chain is Imidazole glycerol phosphate synthase subunit HisF from Bacillus mycoides (strain KBAB4) (Bacillus weihenstephanensis).